The sequence spans 271 residues: Phosphate import ATP-binding protein PstB (271 aa).

Residues 24 to 266 (MIGQDVSVYY…PDDPRTQDYI (243 aa)) enclose the ABC transporter domain. 56 to 63 (GPSGCGKS) is a binding site for ATP.

The protein belongs to the ABC transporter superfamily. Phosphate importer (TC 3.A.1.7) family. In terms of assembly, the complex is composed of two ATP-binding proteins (PstB), two transmembrane proteins (PstC and PstA) and a solute-binding protein (PstS).

It is found in the cell inner membrane. The enzyme catalyses phosphate(out) + ATP + H2O = ADP + 2 phosphate(in) + H(+). Part of the ABC transporter complex PstSACB involved in phosphate import. Responsible for energy coupling to the transport system. This chain is Phosphate import ATP-binding protein PstB, found in Rhizobium etli (strain ATCC 51251 / DSM 11541 / JCM 21823 / NBRC 15573 / CFN 42).